Consider the following 310-residue polypeptide: Methionyl-tRNA formyltransferase (310 aa).

110 to 113 (SVLP) is a (6S)-5,6,7,8-tetrahydrofolate binding site. The interval 283–310 (TVQPPGKKSMNAADWARGARAEDIRRAR) is disordered. A compositionally biased stretch (basic and acidic residues) spans 299–310 (RGARAEDIRRAR).

Belongs to the Fmt family.

The catalysed reaction is L-methionyl-tRNA(fMet) + (6R)-10-formyltetrahydrofolate = N-formyl-L-methionyl-tRNA(fMet) + (6S)-5,6,7,8-tetrahydrofolate + H(+). In terms of biological role, attaches a formyl group to the free amino group of methionyl-tRNA(fMet). The formyl group appears to play a dual role in the initiator identity of N-formylmethionyl-tRNA by promoting its recognition by IF2 and preventing the misappropriation of this tRNA by the elongation apparatus. The chain is Methionyl-tRNA formyltransferase from Mycolicibacterium gilvum (strain PYR-GCK) (Mycobacterium gilvum (strain PYR-GCK)).